The sequence spans 172 residues: Disulfide bond formation protein B (172 aa).

Residues 1–13 are Cytoplasmic-facing; the sequence is MIIRLAGMSVRQG. The helical transmembrane segment at 14 to 30 threads the bilayer; the sequence is CLLGLLMCALMMGVALV. Residues 31–48 lie on the Periplasmic side of the membrane; that stretch reads LQYVYGLTPCPLCIGQRI. A disulfide bond links C40 and C43. Residues 49–65 form a helical membrane-spanning segment; it reads AVLLAAFVFAIGALHNP. At 66 to 72 the chain is on the cytoplasmic side; the sequence is AGNLGRG. The chain crosses the membrane as a helical span at residues 73 to 90; the sequence is LYAGLAALASVLGLAVAA. The Periplasmic segment spans residues 91–147; that stretch reads RHVWLQSLPPENVPSCGPGLDYMMEVLPLWDVLSRVLAGSGECAEIHGSLLGMSIPQ. The cysteines at positions 106 and 133 are disulfide-linked. The chain crosses the membrane as a helical span at residues 148 to 166; the sequence is WTLLGFAVLLLIPLGMLAG. The Cytoplasmic portion of the chain corresponds to 167–172; sequence IVIRRR.

It belongs to the DsbB family.

The protein resides in the cell inner membrane. Required for disulfide bond formation in some periplasmic proteins. Acts by oxidizing the DsbA protein. This chain is Disulfide bond formation protein B, found in Chromohalobacter salexigens (strain ATCC BAA-138 / DSM 3043 / CIP 106854 / NCIMB 13768 / 1H11).